Consider the following 515-residue polypeptide: Putative BTB/POZ domain-containing protein At3g49970 (515 aa).

A BTB domain is found at 1 to 63 (MLEKLSFLLH…CYDISFEINT (63 aa)). Residues 149 to 409 (DWWADDLAVL…NSDSPAPATA (261 aa)) form the NPH3 domain. Phosphotyrosine is present on Y350. The disordered stretch occupies residues 395–417 (QENLSNSDSPAPATAEKTLSPPE). Residues 418–452 (LSSYKNELSKLNRENQYLKLELLKVKMKFKELEKE) are a coiled coil. The tract at residues 494–515 (INPFGLKQGQTKQPKSRRHSIS) is disordered.

Belongs to the NPH3 family.

The protein operates within protein modification; protein ubiquitination. In terms of biological role, may act as a substrate-specific adapter of an E3 ubiquitin-protein ligase complex (CUL3-RBX1-BTB) which mediates the ubiquitination and subsequent proteasomal degradation of target proteins. The sequence is that of Putative BTB/POZ domain-containing protein At3g49970 from Arabidopsis thaliana (Mouse-ear cress).